We begin with the raw amino-acid sequence, 32 residues long: ATP synthase 28 kDa subunit, mitochondrial (32 aa).

It is found in the mitochondrion. The protein localises to the mitochondrion inner membrane. Mitochondrial membrane ATP synthase (F(1)F(0) ATP synthase or Complex V) produces ATP from ADP in the presence of a proton gradient across the membrane which is generated by electron transport complexes of the respiratory chain. F-type ATPases consist of two structural domains, F(1) - containing the extramembraneous catalytic core and F(0) - containing the membrane proton channel, linked together by a central stalk and a peripheral stalk. During catalysis, ATP synthesis in the catalytic domain of F(1) is coupled via a rotary mechanism of the central stalk subunits to proton translocation. Part of the complex F(0) domain. The chain is ATP synthase 28 kDa subunit, mitochondrial from Spinacia oleracea (Spinach).